Here is a 199-residue protein sequence, read N- to C-terminus: GTP cyclohydrolase-2 (199 aa).

GTP is bound at residue 52–56 (RMHSE). Cysteine 57, cysteine 68, and cysteine 70 together coordinate Zn(2+). Residues glutamine 73, 94-96 (EGR), and threonine 116 contribute to the GTP site. The Proton acceptor role is filled by aspartate 128. Catalysis depends on arginine 130, which acts as the Nucleophile. GTP contacts are provided by threonine 151 and lysine 156.

The protein belongs to the GTP cyclohydrolase II family. It depends on Zn(2+) as a cofactor.

It catalyses the reaction GTP + 4 H2O = 2,5-diamino-6-hydroxy-4-(5-phosphoribosylamino)-pyrimidine + formate + 2 phosphate + 3 H(+). It functions in the pathway cofactor biosynthesis; riboflavin biosynthesis; 5-amino-6-(D-ribitylamino)uracil from GTP: step 1/4. Catalyzes the conversion of GTP to 2,5-diamino-6-ribosylamino-4(3H)-pyrimidinone 5'-phosphate (DARP), formate and pyrophosphate. The polypeptide is GTP cyclohydrolase-2 (Aliivibrio fischeri (strain MJ11) (Vibrio fischeri)).